Consider the following 566-residue polypeptide: Amino acid transporter 6-1 (566 aa).

The next 11 membrane-spanning stretches (helical) occupy residues 65 to 85, 137 to 157, 158 to 178, 187 to 207, 216 to 236, 250 to 270, 334 to 354, 367 to 387, 392 to 412, 423 to 443, and 455 to 475; these read YVLL…FYGW, MTFA…DWLG, PLWT…FLAF, YPAL…TLCI, GLII…PLVL, VSIG…LLFM, FFSI…WATS, DVVS…ILLG, VVGI…TYVF, LSAC…YVYV, and LIGI…PLYE. Residue N476 is glycosylated (N-linked (GlcNAc...) asparagine). A helical transmembrane segment spans residues 489 to 509; that stretch reads IQIAMTALLCVQYVWIFILGF.

Belongs to the SLC43A transporter (TC 2.A.1.44) family.

The protein localises to the cell membrane. The enzyme catalyses L-lysine(in) = L-lysine(out). It catalyses the reaction L-arginine(in) = L-arginine(out). It carries out the reaction L-methionine(in) = L-methionine(out). The catalysed reaction is L-leucine(in) = L-leucine(out). Its function is as follows. Cationic and neutral amino acid transporter. Transports lysine with high affinity. Can transport arginine, methionine and leucine. Does not require inorganic ions, such as sodium, chloride, potassium, calcium or magnesium, for transport activity. This chain is Amino acid transporter 6-1, found in Toxoplasma gondii (strain ATCC 50611 / Me49).